We begin with the raw amino-acid sequence, 379 residues long: Cytochrome b (379 aa).

The next 4 helical transmembrane spans lie at 34-54, 78-99, 114-134, and 179-199; these read FGSL…LLAM, WFIR…YLHI, WNTG…GYVL, and FFAL…VHLT. 2 residues coordinate heme b: histidine 84 and histidine 98. Histidine 183 and histidine 197 together coordinate heme b. Histidine 202 is an a ubiquinone binding site. 4 helical membrane passes run 227 to 247, 289 to 309, 321 to 341, and 348 to 368; these read LKDI…AFFS, LGGV…PLLH, LSQL…WIGS, and FIII…VLFP.

This sequence belongs to the cytochrome b family. As to quaternary structure, the cytochrome bc1 complex contains 11 subunits: 3 respiratory subunits (MT-CYB, CYC1 and UQCRFS1), 2 core proteins (UQCRC1 and UQCRC2) and 6 low-molecular weight proteins (UQCRH/QCR6, UQCRB/QCR7, UQCRQ/QCR8, UQCR10/QCR9, UQCR11/QCR10 and a cleavage product of UQCRFS1). This cytochrome bc1 complex then forms a dimer. The cofactor is heme b.

The protein resides in the mitochondrion inner membrane. In terms of biological role, component of the ubiquinol-cytochrome c reductase complex (complex III or cytochrome b-c1 complex) that is part of the mitochondrial respiratory chain. The b-c1 complex mediates electron transfer from ubiquinol to cytochrome c. Contributes to the generation of a proton gradient across the mitochondrial membrane that is then used for ATP synthesis. This chain is Cytochrome b (MT-CYB), found in Struthio camelus (Common ostrich).